The primary structure comprises 712 residues: 1,4-alpha-glucan branching enzyme GlgB (712 aa).

The active-site Nucleophile is D397. E450 functions as the Proton donor in the catalytic mechanism.

The protein belongs to the glycosyl hydrolase 13 family. GlgB subfamily. As to quaternary structure, monomer.

It catalyses the reaction Transfers a segment of a (1-&gt;4)-alpha-D-glucan chain to a primary hydroxy group in a similar glucan chain.. The protein operates within glycan biosynthesis; glycogen biosynthesis. Functionally, catalyzes the formation of the alpha-1,6-glucosidic linkages in glycogen by scission of a 1,4-alpha-linked oligosaccharide from growing alpha-1,4-glucan chains and the subsequent attachment of the oligosaccharide to the alpha-1,6 position. This is 1,4-alpha-glucan branching enzyme GlgB from Bradyrhizobium sp. (strain BTAi1 / ATCC BAA-1182).